We begin with the raw amino-acid sequence, 382 residues long: Ribosomal RNA large subunit methyltransferase G (382 aa).

This sequence belongs to the methyltransferase superfamily. RlmG family.

The protein resides in the cytoplasm. The catalysed reaction is guanosine(1835) in 23S rRNA + S-adenosyl-L-methionine = N(2)-methylguanosine(1835) in 23S rRNA + S-adenosyl-L-homocysteine + H(+). In terms of biological role, specifically methylates the guanine in position 1835 (m2G1835) of 23S rRNA. This Psychromonas ingrahamii (strain DSM 17664 / CCUG 51855 / 37) protein is Ribosomal RNA large subunit methyltransferase G.